Here is a 365-residue protein sequence, read N- to C-terminus: tRNA N6-adenosine threonylcarbamoyltransferase (365 aa).

H119 and H123 together coordinate Fe cation. Substrate is bound by residues L141–G145, D174, G187, and N288. D316 is a binding site for Fe cation.

It belongs to the KAE1 / TsaD family. Fe(2+) serves as cofactor.

It localises to the cytoplasm. The enzyme catalyses L-threonylcarbamoyladenylate + adenosine(37) in tRNA = N(6)-L-threonylcarbamoyladenosine(37) in tRNA + AMP + H(+). Functionally, required for the formation of a threonylcarbamoyl group on adenosine at position 37 (t(6)A37) in tRNAs that read codons beginning with adenine. Is involved in the transfer of the threonylcarbamoyl moiety of threonylcarbamoyl-AMP (TC-AMP) to the N6 group of A37, together with TsaE and TsaB. TsaD likely plays a direct catalytic role in this reaction. In Rhizobium leguminosarum bv. trifolii (strain WSM2304), this protein is tRNA N6-adenosine threonylcarbamoyltransferase.